The following is a 386-amino-acid chain: Diels-Alderase phm7 (386 aa).

Residues 1–223 (MSEPTSSSSL…MVRGWSARPW (223 aa)) are beta-sandwich motif. Residues Glu-51, Asn-84, and Lys-356 each coordinate substrate. The tract at residues 223–386 (WPTFMNDAYY…FGGQLQIPVP (164 aa)) is beta-barrel motif.

Belongs to the Diels-Alderase family.

It participates in secondary metabolite biosynthesis. Its activity is regulated as follows. 3-aminomethyl-p-menthane which is similar to the phomasetin substructure, dose-dependently inhibits phm7 activity in vitro and production of phomasetin in the fungus. In terms of biological role, diels-Alderase; part of the gene cluster that mediates the biosynthesis of the trans-fused decalin-containing tetramic acid phomasetin, the stereochemical opposite of the HIV-1 integrase inhibitor equisetin. The PKS module of phm1 together with the enoylreductase phm4 catalyze the formation of the polyketide unit which is then conjugated to L-serine by the condensation domain of the phm1 NRPS module. Activity of the Dieckmann cyclase domain (RED) of phm1 results in release of the Dieckmann product intermediate. The Diels-Alderase phm7 then uses the Dieckmann product of phm1 as substrate and catalyzes the Diels-Alder cycloaddition to form the decalin ring of N-desmethylphomasetin. N-desmethylphomasetin is further methylated to phomasetin by the methyltransferase phm5. In Pyrenochaetopsis sp, this protein is Diels-Alderase phm7.